The sequence spans 158 residues: Regulator of sigma D (158 aa).

Belongs to the Rsd/AlgQ family. In terms of assembly, interacts with RpoD.

It is found in the cytoplasm. Its function is as follows. Binds RpoD and negatively regulates RpoD-mediated transcription activation by preventing the interaction between the primary sigma factor RpoD with the catalytic core of the RNA polymerase and with promoter DNA. May be involved in replacement of the RNA polymerase sigma subunit from RpoD to RpoS during the transition from exponential growth to the stationary phase. This is Regulator of sigma D from Escherichia coli O6:H1 (strain CFT073 / ATCC 700928 / UPEC).